Consider the following 92-residue polypeptide: LYR motif-containing protein 4 homolog (92 aa).

Residues 48 to 68 (AEIDRQMAEGQQNLELIRRQV) are a coiled coil.

This sequence belongs to the complex I LYR family. As to quaternary structure, component of the mitochondrial core iron-sulfur cluster (ISC) assembly complex at least composed of the cysteine desulfurase Nfs1, the scaffold protein IscU, the accessory protein bcn92/Isd11/Lyrm4, and probably fh/frataxin. Interacts with Nfs1.

It localises to the mitochondrion. Stabilizing factor of the core iron-sulfur cluster (ISC) assembly complex that regulates the stability and cysteine desulfurase activity of Nfs1 and participates in the [2Fe-2S] clusters assembly on the scaffolding protein IscU. The polypeptide is LYR motif-containing protein 4 homolog (Drosophila melanogaster (Fruit fly)).